Reading from the N-terminus, the 504-residue chain is Maturase K (504 aa).

This sequence belongs to the intron maturase 2 family. MatK subfamily.

Its subcellular location is the plastid. The protein resides in the chloroplast. Usually encoded in the trnK tRNA gene intron. Probably assists in splicing its own and other chloroplast group II introns. This chain is Maturase K, found in Lablab purpureus (Hyacinth bean).